A 248-amino-acid chain; its full sequence is Probable transcriptional regulatory protein Mnod_7401 (248 aa).

The protein belongs to the TACO1 family.

The protein resides in the cytoplasm. This is Probable transcriptional regulatory protein Mnod_7401 from Methylobacterium nodulans (strain LMG 21967 / CNCM I-2342 / ORS 2060).